A 126-amino-acid polypeptide reads, in one-letter code: Large ribosomal subunit protein bL12 (126 aa).

The protein belongs to the bacterial ribosomal protein bL12 family. In terms of assembly, homodimer. Part of the ribosomal stalk of the 50S ribosomal subunit. Forms a multimeric L10(L12)X complex, where L10 forms an elongated spine to which 2 to 4 L12 dimers bind in a sequential fashion. Binds GTP-bound translation factors.

In terms of biological role, forms part of the ribosomal stalk which helps the ribosome interact with GTP-bound translation factors. Is thus essential for accurate translation. This is Large ribosomal subunit protein bL12 from Rhizorhabdus wittichii (strain DSM 6014 / CCUG 31198 / JCM 15750 / NBRC 105917 / EY 4224 / RW1) (Sphingomonas wittichii).